The chain runs to 131 residues: MSWQTYVDDHLMCDIDGHRLTAAAIIGHDGSVWAQSSSFPQFKSDEVAAVMKDFDEPGSLAPTGLHLGGTKYMVIQGEPGAVIRGKKGSGGITVKKTGQALIIGIYDEPLTPGQCNMIVERLGDYLLDQGL.

The protein belongs to the profilin family. In terms of assembly, occurs in many kinds of cells as a complex with monomeric actin in a 1:1 ratio.

It is found in the cytoplasm. It localises to the cytoskeleton. Binds to actin and affects the structure of the cytoskeleton. At high concentrations, profilin prevents the polymerization of actin, whereas it enhances it at low concentrations. By binding to PIP2, it inhibits the formation of IP3 and DG. In Hevea brasiliensis (Para rubber tree), this protein is Profilin-6.